A 359-amino-acid polypeptide reads, in one-letter code: WAT1-related protein At4g28040 (359 aa).

10 consecutive transmembrane segments (helical) span residues 10–30, 37–57, 66–86, 103–123, 133–153, 170–190, 204–224, 240–260, 266–286, and 292–312; these read LALV…KAAF, TVFV…ISFI, PSLG…GVTV, ACAM…IVGF, SVAK…MTFL, WLLG…WLIL, TSAC…LALG, SCCI…AWIV, VFSA…GALY, and YLGS…VLWG. The region spanning 18–131 is the EamA 1 domain; it reads TSAGVALFTK…GFESIKRRSM (114 aa). In terms of domain architecture, EamA 2 spans 199 to 310; that stretch reads PDHLYTSACT…AIILGLYIVL (112 aa).

Belongs to the drug/metabolite transporter (DMT) superfamily. Plant drug/metabolite exporter (P-DME) (TC 2.A.7.4) family.

The protein localises to the membrane. This chain is WAT1-related protein At4g28040, found in Arabidopsis thaliana (Mouse-ear cress).